The chain runs to 394 residues: Probable tRNA sulfurtransferase (394 aa).

The THUMP domain maps to 61 to 168 (DETVATLSRI…PMINIYSEEI (108 aa)). Residues 185-186 (LL), 210-211 (YF), R267, G289, and Q298 each bind ATP.

It belongs to the ThiI family.

It localises to the cytoplasm. It catalyses the reaction [ThiI sulfur-carrier protein]-S-sulfanyl-L-cysteine + a uridine in tRNA + 2 reduced [2Fe-2S]-[ferredoxin] + ATP + H(+) = [ThiI sulfur-carrier protein]-L-cysteine + a 4-thiouridine in tRNA + 2 oxidized [2Fe-2S]-[ferredoxin] + AMP + diphosphate. The enzyme catalyses [ThiS sulfur-carrier protein]-C-terminal Gly-Gly-AMP + S-sulfanyl-L-cysteinyl-[cysteine desulfurase] + AH2 = [ThiS sulfur-carrier protein]-C-terminal-Gly-aminoethanethioate + L-cysteinyl-[cysteine desulfurase] + A + AMP + 2 H(+). It participates in cofactor biosynthesis; thiamine diphosphate biosynthesis. Its function is as follows. Catalyzes the ATP-dependent transfer of a sulfur to tRNA to produce 4-thiouridine in position 8 of tRNAs, which functions as a near-UV photosensor. Also catalyzes the transfer of sulfur to the sulfur carrier protein ThiS, forming ThiS-thiocarboxylate. This is a step in the synthesis of thiazole, in the thiamine biosynthesis pathway. The sulfur is donated as persulfide by IscS. The chain is Probable tRNA sulfurtransferase from Agathobacter rectalis (strain ATCC 33656 / DSM 3377 / JCM 17463 / KCTC 5835 / VPI 0990) (Eubacterium rectale).